A 257-amino-acid polypeptide reads, in one-letter code: Ethanolamine ammonia-lyase small subunit (257 aa).

Residues Val153, Glu174, and Cys203 each coordinate adenosylcob(III)alamin.

The protein belongs to the EutC family. As to quaternary structure, the basic unit is a heterodimer which dimerizes to form tetramers. The heterotetramers trimerize; 6 large subunits form a core ring with 6 small subunits projecting outwards. Requires adenosylcob(III)alamin as cofactor.

It localises to the bacterial microcompartment. It carries out the reaction ethanolamine = acetaldehyde + NH4(+). Its pathway is amine and polyamine degradation; ethanolamine degradation. In terms of biological role, catalyzes the deamination of various vicinal amino-alcohols to oxo compounds. Allows this organism to utilize ethanolamine as the sole source of nitrogen and carbon in the presence of external vitamin B12. The chain is Ethanolamine ammonia-lyase small subunit from Rhodococcus erythropolis (Arthrobacter picolinophilus).